We begin with the raw amino-acid sequence, 419 residues long: UDP-N-acetylglucosamine 1-carboxyvinyltransferase (419 aa).

Position 22 to 23 (22 to 23 (KN)) interacts with phosphoenolpyruvate. Arg95 serves as a coordination point for UDP-N-acetyl-alpha-D-glucosamine. The Proton donor role is filled by Cys119. Cys119 carries the post-translational modification 2-(S-cysteinyl)pyruvic acid O-phosphothioketal. Residues 164-167 (KVSV), Asp308, and Ile330 each bind UDP-N-acetyl-alpha-D-glucosamine.

It belongs to the EPSP synthase family. MurA subfamily.

It is found in the cytoplasm. The catalysed reaction is phosphoenolpyruvate + UDP-N-acetyl-alpha-D-glucosamine = UDP-N-acetyl-3-O-(1-carboxyvinyl)-alpha-D-glucosamine + phosphate. It participates in cell wall biogenesis; peptidoglycan biosynthesis. Cell wall formation. Adds enolpyruvyl to UDP-N-acetylglucosamine. The polypeptide is UDP-N-acetylglucosamine 1-carboxyvinyltransferase (Rickettsia massiliae (strain Mtu5)).